Reading from the N-terminus, the 68-residue chain is Large ribosomal subunit protein uL29 (68 aa).

This sequence belongs to the universal ribosomal protein uL29 family.

In Chloroflexus aurantiacus (strain ATCC 29364 / DSM 637 / Y-400-fl), this protein is Large ribosomal subunit protein uL29.